We begin with the raw amino-acid sequence, 183 residues long: Dual-action ribosomal maturation protein DarP (183 aa).

Residues 1–23 (MTKQPDDWLDEVPDNENDDDDDE) form a disordered region. Positions 7-23 (DWLDEVPDNENDDDDDE) are enriched in acidic residues.

This sequence belongs to the DarP family.

The protein resides in the cytoplasm. Its function is as follows. Member of a network of 50S ribosomal subunit biogenesis factors which assembles along the 30S-50S interface, preventing incorrect 23S rRNA structures from forming. Promotes peptidyl transferase center (PTC) maturation. The sequence is that of Dual-action ribosomal maturation protein DarP from Cronobacter sakazakii (strain ATCC BAA-894) (Enterobacter sakazakii).